Consider the following 365-residue polypeptide: Zinc finger TRAF-type-containing protein 1-A (365 aa).

The disordered stretch occupies residues 1-56 (MSEEREAPGPLASSSAGLGAEVGQEEVPGGAGPARLLLLPSDSDGPPKKRLRSEAE). The RING-type; degenerate zinc finger occupies 72–117 (CTVCLDLPKASVYQCTNGHLMCAGCFIHLLADSRLKEEQATCPNCR). The TRAF-type zinc-finger motif lies at 113–186 (CPNCRCEISK…PWEGPYHELT (74 aa)).

Belongs to the ZFTRAF1 family.

It is found in the cytoplasm. The chain is Zinc finger TRAF-type-containing protein 1-A from Xenopus laevis (African clawed frog).